The chain runs to 135 residues: Large ribosomal subunit protein uL16 (135 aa).

The protein belongs to the universal ribosomal protein uL16 family. Part of the 50S ribosomal subunit.

Functionally, binds 23S rRNA and is also seen to make contacts with the A and possibly P site tRNAs. The protein is Large ribosomal subunit protein uL16 (rplP) of Carsonella ruddii (strain PV).